The sequence spans 637 residues: Chaperone protein dnaK2 (637 aa).

Residue threonine 197 is modified to Phosphothreonine; by autocatalysis. Residues 602–637 (AAAGGAAPGGDAGASAASGGGDASDDVIDAEFTETK) are disordered. The segment covering 603–623 (AAGGAAPGGDAGASAASGGGD) has biased composition (gly residues). Residues 624-637 (ASDDVIDAEFTETK) show a composition bias toward acidic residues.

It belongs to the heat shock protein 70 family.

In terms of biological role, acts as a chaperone. In Parasynechococcus marenigrum (strain WH8102), this protein is Chaperone protein dnaK2 (dnaK2).